We begin with the raw amino-acid sequence, 314 residues long: 2,3-dihydroxyphenylpropionate/2,3-dihydroxicinnamic acid 1,2-dioxygenase (314 aa).

The Proton donor role is filled by H115. H179 serves as the catalytic Proton acceptor.

This sequence belongs to the LigB/MhpB extradiol dioxygenase family. In terms of assembly, homotetramer. Fe(2+) serves as cofactor.

The catalysed reaction is 3-(2,3-dihydroxyphenyl)propanoate + O2 = (2Z,4E)-2-hydroxy-6-oxonona-2,4-dienedioate + H(+). It catalyses the reaction (2E)-3-(2,3-dihydroxyphenyl)prop-2-enoate + O2 = (2Z,4E,7E)-2-hydroxy-6-oxonona-2,4,7-trienedioate + H(+). Its pathway is aromatic compound metabolism; 3-phenylpropanoate degradation. Functionally, catalyzes the non-heme iron(II)-dependent oxidative cleavage of 2,3-dihydroxyphenylpropionic acid and 2,3-dihydroxicinnamic acid into 2-hydroxy-6-ketononadienedioate and 2-hydroxy-6-ketononatrienedioate, respectively. This chain is 2,3-dihydroxyphenylpropionate/2,3-dihydroxicinnamic acid 1,2-dioxygenase, found in Escherichia coli O139:H28 (strain E24377A / ETEC).